We begin with the raw amino-acid sequence, 236 residues long: MLLLISPINTEEALEAIEGGADIVDVKNPAEGSLGANFPWVIRRVREMTPEDMLVSATLGDVPYKPGTVSLAAMGALVSGADYIKVGLYGTRNYDEAVDVMKNVVRAVKDQSDAIVVAAGYADAHRVGAVEPMEIPRVAADSGADLAMLDTAVKDGKTLFDFMDMEKLESFVSAARDHGLKSALAGSVGREHLKPLHEIGCDVVGIRGAACVGGDRNTGRIHRDAVRELKELLDSF.

Lys-27 functions as the Schiff-base intermediate with substrate in the catalytic mechanism. Residue Lys-85 is the Proton acceptor of the active site.

It belongs to the MfnB family.

The catalysed reaction is 2 D-glyceraldehyde 3-phosphate = 4-(hydroxymethyl)-2-furancarboxaldehyde phosphate + phosphate + 2 H2O. The protein operates within cofactor biosynthesis; methanofuran biosynthesis. Catalyzes the formation of 4-(hydroxymethyl)-2-furancarboxaldehyde phosphate (4-HFC-P) from two molecules of glyceraldehyde-3-P (GA-3-P). The chain is (5-formylfuran-3-yl)methyl phosphate synthase from Methanothermobacter thermautotrophicus (strain ATCC 29096 / DSM 1053 / JCM 10044 / NBRC 100330 / Delta H) (Methanobacterium thermoautotrophicum).